We begin with the raw amino-acid sequence, 343 residues long: Lumican (343 aa).

Positions methionine 1–cysteine 18 are cleaved as a signal peptide. Glutamine 19 is modified (pyrrolidone carboxylic acid). Tyrosine 20 and tyrosine 22 each carry sulfotyrosine. An LRRNT domain is found at aspartate 31–serine 69. 8 LRR repeats span residues glycine 70–asparagine 91, aspartate 94–lysine 117, asparagine 120–lysine 140, threonine 141–glycine 162, asparagine 165–lysine 186, serine 190–serine 211, leucine 212–glycine 232, and threonine 235–valine 255. Residue asparagine 91 is glycosylated (N-linked (GlcNAc...) (keratan sulfate) asparagine). N-linked (GlcNAc...) (keratan sulfate) asparagine glycosylation occurs at asparagine 130. Asparagine 165 carries N-linked (GlcNAc...) (keratan sulfate) asparagine glycosylation. N-linked (GlcNAc...) (keratan sulfate) asparagine glycosylation is present at asparagine 257. LRR repeat units follow at residues serine 260 to leucine 281, glutamate 282 to lysine 301, and lysine 310 to methionine 330. Cysteine 300 and cysteine 333 are oxidised to a cystine. N-linked (GlcNAc...) asparagine glycosylation occurs at asparagine 320.

It belongs to the small leucine-rich proteoglycan (SLRP) family. SLRP class II subfamily. Binds to laminin. Contains keratan sulfate.

It localises to the secreted. The protein localises to the extracellular space. It is found in the extracellular matrix. This Coturnix japonica (Japanese quail) protein is Lumican (LUM).